We begin with the raw amino-acid sequence, 258 residues long: Pimeloyl-[acyl-carrier protein] methyl ester esterase (258 aa).

The AB hydrolase-1 domain maps to 16–241 (LVLLHGWGLN…GSAHAPFVSH (226 aa)). Substrate is bound by residues Trp22, 82–83 (SM), and 143–147 (FLALQ). Ser82 (nucleophile) is an active-site residue. Active-site residues include Asp207 and His235. His235 contributes to the substrate binding site.

The protein belongs to the AB hydrolase superfamily. Carboxylesterase BioH family. Monomer.

The protein resides in the cytoplasm. The catalysed reaction is 6-carboxyhexanoyl-[ACP] methyl ester + H2O = 6-carboxyhexanoyl-[ACP] + methanol + H(+). It functions in the pathway cofactor biosynthesis; biotin biosynthesis. Functionally, the physiological role of BioH is to remove the methyl group introduced by BioC when the pimeloyl moiety is complete. It allows to synthesize pimeloyl-ACP via the fatty acid synthetic pathway through the hydrolysis of the ester bonds of pimeloyl-ACP esters. This Yersinia enterocolitica serotype O:8 / biotype 1B (strain NCTC 13174 / 8081) protein is Pimeloyl-[acyl-carrier protein] methyl ester esterase.